The following is a 281-amino-acid chain: 1-acyl-sn-glycerol-3-phosphate acyltransferase (281 aa).

A run of 3 helical transmembrane segments spans residues 40 to 60 (IFVC…IMVL), 71 to 91 (LGNL…GIPI), and 110 to 130 (ASPI…VGVA). Residues 109–114 (HASPID) carry the HXXXXD motif motif.

The protein belongs to the 1-acyl-sn-glycerol-3-phosphate acyltransferase family.

It localises to the membrane. The enzyme catalyses a 1-acyl-sn-glycero-3-phosphate + an acyl-CoA = a 1,2-diacyl-sn-glycero-3-phosphate + CoA. It functions in the pathway phospholipid metabolism; CDP-diacylglycerol biosynthesis; CDP-diacylglycerol from sn-glycerol 3-phosphate: step 2/3. Converts lysophosphatidic acid (LPA) into phosphatidic acid by incorporating acyl moiety at the 2 position. This enzyme uses erucoyl-CoA as an acyl donor. This Limnanthes alba (White meadowfoam) protein is 1-acyl-sn-glycerol-3-phosphate acyltransferase.